The following is a 327-amino-acid chain: DNA-directed RNA polymerase subunit alpha (327 aa).

The interval 1-233 (MVREKVKVST…NLFIPFLHVE (233 aa)) is alpha N-terminal domain (alpha-NTD). The interval 267–327 (LAFQYIFIDQ…KKILDILEKK (61 aa)) is alpha C-terminal domain (alpha-CTD).

It belongs to the RNA polymerase alpha chain family. In terms of assembly, in plastids the minimal PEP RNA polymerase catalytic core is composed of four subunits: alpha, beta, beta', and beta''. When a (nuclear-encoded) sigma factor is associated with the core the holoenzyme is formed, which can initiate transcription.

It localises to the plastid. It is found in the chloroplast. The enzyme catalyses RNA(n) + a ribonucleoside 5'-triphosphate = RNA(n+1) + diphosphate. DNA-dependent RNA polymerase catalyzes the transcription of DNA into RNA using the four ribonucleoside triphosphates as substrates. The polypeptide is DNA-directed RNA polymerase subunit alpha (Lepidium virginicum (Virginia pepperweed)).